A 443-amino-acid polypeptide reads, in one-letter code: ATP-dependent protease ATPase subunit HslU (443 aa).

ATP-binding positions include isoleucine 18, 60 to 65, aspartate 256, glutamate 321, and arginine 393; that span reads GVGKTE.

It belongs to the ClpX chaperone family. HslU subfamily. A double ring-shaped homohexamer of HslV is capped on each side by a ring-shaped HslU homohexamer. The assembly of the HslU/HslV complex is dependent on binding of ATP.

It localises to the cytoplasm. ATPase subunit of a proteasome-like degradation complex; this subunit has chaperone activity. The binding of ATP and its subsequent hydrolysis by HslU are essential for unfolding of protein substrates subsequently hydrolyzed by HslV. HslU recognizes the N-terminal part of its protein substrates and unfolds these before they are guided to HslV for hydrolysis. The sequence is that of ATP-dependent protease ATPase subunit HslU from Shigella boydii serotype 18 (strain CDC 3083-94 / BS512).